The chain runs to 327 residues: uncharacterized protein (327 aa).

Residues 1–19 (MSIAQDRGIVFKLLSIYRA) lie on the Cytoplasmic side of the membrane. A helical membrane pass occupies residues 20–40 (AAGIFMALAQLIVIFFGYCDF). Over 41–51 (KIKGYRIASYN) the chain is Extracellular. The chain crosses the membrane as a helical span at residues 52-72 (APTFASSFIILAVCLLLVVVL). Residues 73-104 (ENPEVKVTNSENSLFSALKQFFRVERKKLISC) are Cytoplasmic-facing. The helical transmembrane segment at 105-125 (LILLWSMFLSSFIMSEVVYFM) threads the bilayer. Residues 126-141 (PLFLTLHVNWDTKFQG) lie on the Extracellular side of the membrane. Residues 142 to 162 (IAFMVASILGVTGSYFAPKLI) form a helical membrane-spanning segment. The Cytoplasmic segment spans residues 163-199 (NVGCSCGRAKDGGLEESDTTGSETVEVKKKDSLYSGQ). The helical transmembrane segment at 200 to 220 (VFLSIFALFVSLLGQAFMIGA) threads the bilayer. Topologically, residues 221 to 235 (SEALKHKSMPPTNSG) are extracellular. A helical membrane pass occupies residues 236 to 256 (IFFSAGMSITLLGYNFLASSI). Topologically, residues 257-275 (PALFSMYIDPKLKVQLMPS) are cytoplasmic. Residues 276–296 (IGAISGIGKLVAPIVLAALYG) traverse the membrane as a helical segment. Residues 297–300 (TRLG) are Extracellular-facing. The chain crosses the membrane as a helical span at residues 301-321 (LSIAVGFGMILVAVSIPPLIW). Residues 322 to 327 (LRKKRC) are Cytoplasmic-facing.

The protein localises to the membrane. This is an uncharacterized protein from Saccharomyces cerevisiae (strain ATCC 204508 / S288c) (Baker's yeast).